Reading from the N-terminus, the 600-residue chain is MLCSVIQRQTREVSNTMSLDSYYLGFDLSTQQLKCLAINQDLKIVHSETVEFEKDLPHYHTKKGVYIHGDTIECPVAMWLEALDLVLSKYREAKFPLNKVMAVSGSCQQHGSVYWSSQAESLLEQLNKKPEKDLLHYVSSVAFARQTAPNWQDHSTAKQCQEFEECIGGPEKMAQLTGSRAHFRFTGPQILKIAQLEPEAYEKTKTISLVSNFLTSILVGHLVELEEADACGMNLYDIRERKFSDELLHLIDSSSKDKTIRQKLMRAPMKNLIAGTICKYFIEKYGFNTNCKVSPMTGDNLATICSLPLRKNDVLVSLGTSTTVLLVTDKYHPSPNYHLFIHPTLPNHYMGMICYCNGSLARERIRDELNKERENNYEKTNDWTLFNQAVLDDSESSENELGVYFPLGEIVPSVKAINKRVIFNPKTGMIEREVAKFKDKRHDAKNIVESQALSCRVRISPLLSDSNASSQQRLNEDTIVKFDYDESPLRDYLNKRPERTFFVGGASKNDAIVKKFAQVIGATKGNFRLETPNSCALGGCYKAMWSLLYDSNKIAVPFDKFLNDNFPWHVMESISDVDNENWDRYNSKIVPLSELEKTLI.

79-82 (WLEA) is a substrate binding site. At serine 244 the chain carries Phosphoserine. Aspartate 299 contacts substrate. Residues glycine 358 and 505-509 (GASKN) each bind ATP.

The protein belongs to the FGGY kinase family.

It is found in the cytoplasm. The enzyme catalyses D-xylulose + ATP = D-xylulose 5-phosphate + ADP + H(+). Its function is as follows. Xylulose kinase necessary for growth in culture media with D-xylulose as the solecarbon source. The polypeptide is Xylulose kinase (Saccharomyces cerevisiae (strain ATCC 204508 / S288c) (Baker's yeast)).